Consider the following 336-residue polypeptide: tRNA N6-adenosine threonylcarbamoyltransferase (336 aa).

Positions 112 and 116 each coordinate Fe cation. Substrate contacts are provided by residues 136–140 (LVSGG), Asp-169, Gly-182, and Asn-276. Asp-304 is a Fe cation binding site.

Belongs to the KAE1 / TsaD family. Fe(2+) serves as cofactor.

Its subcellular location is the cytoplasm. The catalysed reaction is L-threonylcarbamoyladenylate + adenosine(37) in tRNA = N(6)-L-threonylcarbamoyladenosine(37) in tRNA + AMP + H(+). Its function is as follows. Required for the formation of a threonylcarbamoyl group on adenosine at position 37 (t(6)A37) in tRNAs that read codons beginning with adenine. Is involved in the transfer of the threonylcarbamoyl moiety of threonylcarbamoyl-AMP (TC-AMP) to the N6 group of A37, together with TsaE and TsaB. TsaD likely plays a direct catalytic role in this reaction. The polypeptide is tRNA N6-adenosine threonylcarbamoyltransferase (Francisella tularensis subsp. novicida (strain U112)).